The following is a 230-amino-acid chain: Ribonuclease HII (230 aa).

An RNase H type-2 domain is found at 21–212; sequence GPVAGVDEVG…VRRVANGSGG (192 aa). Residues aspartate 27, glutamate 28, and aspartate 121 each contribute to the a divalent metal cation site.

The protein belongs to the RNase HII family. Mn(2+) serves as cofactor. It depends on Mg(2+) as a cofactor.

It is found in the cytoplasm. It carries out the reaction Endonucleolytic cleavage to 5'-phosphomonoester.. In terms of biological role, endonuclease that specifically degrades the RNA of RNA-DNA hybrids. The sequence is that of Ribonuclease HII from Mycobacterium avium (strain 104).